The following is a 780-amino-acid chain: Pentatricopeptide repeat-containing protein At1g79540 (780 aa).

17 PPR repeats span residues 91 to 125 (SRES…GVSV), 126 to 160 (DSYC…DCRP), 161 to 196 (DVFT…NCSP), 197 to 231 (NLYT…GISP), 232 to 266 (NRVT…GNYP), 267 to 301 (DSVA…GFVL), 302 to 336 (GLRG…NIKP), 337 to 371 (DIIL…GISP), 372 to 406 (DTYC…ESFP), 407 to 441 (DACT…GCSP), 442 to 476 (SVAT…RPAS), 481 to 515 (LSHS…GSSP), 516 to 550 (DIVS…GLSP), 551 to 585 (DSVT…RHSP), 653 to 687 (TLGP…KILV), 688 to 722 (TPPS…NFKL), and 723 to 758 (MPRV…GYNV).

Belongs to the PPR family. P subfamily.

The protein is Pentatricopeptide repeat-containing protein At1g79540 of Arabidopsis thaliana (Mouse-ear cress).